A 438-amino-acid chain; its full sequence is Glutamyl-tRNA reductase (438 aa).

Residues T55–R58, S118, E123–Q125, and Q129 each bind substrate. C56 serves as the catalytic Nucleophile. G198–I203 provides a ligand contact to NADP(+).

It belongs to the glutamyl-tRNA reductase family. In terms of assembly, homodimer.

It carries out the reaction (S)-4-amino-5-oxopentanoate + tRNA(Glu) + NADP(+) = L-glutamyl-tRNA(Glu) + NADPH + H(+). The protein operates within porphyrin-containing compound metabolism; protoporphyrin-IX biosynthesis; 5-aminolevulinate from L-glutamyl-tRNA(Glu): step 1/2. Functionally, catalyzes the NADPH-dependent reduction of glutamyl-tRNA(Glu) to glutamate 1-semialdehyde (GSA). The protein is Glutamyl-tRNA reductase of Polynucleobacter asymbioticus (strain DSM 18221 / CIP 109841 / QLW-P1DMWA-1) (Polynucleobacter necessarius subsp. asymbioticus).